The chain runs to 122 residues: Large ribosomal subunit protein uL14c (122 aa).

This sequence belongs to the universal ribosomal protein uL14 family. As to quaternary structure, part of the 50S ribosomal subunit.

Its subcellular location is the plastid. It is found in the chloroplast. Its function is as follows. Binds to 23S rRNA. The protein is Large ribosomal subunit protein uL14c of Nicotiana tomentosiformis (Tobacco).